A 191-amino-acid chain; its full sequence is Ribonuclease HII (191 aa).

Residues 7–191 form the RNase H type-2 domain; that stretch reads ILMAGVDEVG…YSPVADLISK (185 aa). The a divalent metal cation site is built by D13, E14, and D103.

It belongs to the RNase HII family. Requires Mn(2+) as cofactor. Mg(2+) serves as cofactor.

The protein resides in the cytoplasm. The enzyme catalyses Endonucleolytic cleavage to 5'-phosphomonoester.. Its function is as follows. Endonuclease that specifically degrades the RNA of RNA-DNA hybrids. The chain is Ribonuclease HII from Legionella pneumophila (strain Corby).